The sequence spans 338 residues: Glycerol-3-phosphate dehydrogenase [NAD(P)+] (338 aa).

Serine 13, tryptophan 14, and lysine 108 together coordinate NADPH. Lysine 108, glycine 139, and serine 141 together coordinate sn-glycerol 3-phosphate. Alanine 143 provides a ligand contact to NADPH. Lysine 194, aspartate 247, serine 257, arginine 258, and asparagine 259 together coordinate sn-glycerol 3-phosphate. The Proton acceptor role is filled by lysine 194. NADPH is bound at residue arginine 258. 2 residues coordinate NADPH: valine 282 and glutamate 284.

Belongs to the NAD-dependent glycerol-3-phosphate dehydrogenase family.

The protein localises to the cytoplasm. It catalyses the reaction sn-glycerol 3-phosphate + NAD(+) = dihydroxyacetone phosphate + NADH + H(+). The enzyme catalyses sn-glycerol 3-phosphate + NADP(+) = dihydroxyacetone phosphate + NADPH + H(+). The protein operates within membrane lipid metabolism; glycerophospholipid metabolism. In terms of biological role, catalyzes the reduction of the glycolytic intermediate dihydroxyacetone phosphate (DHAP) to sn-glycerol 3-phosphate (G3P), the key precursor for phospholipid synthesis. This Streptococcus pneumoniae serotype 19F (strain G54) protein is Glycerol-3-phosphate dehydrogenase [NAD(P)+].